Here is a 795-residue protein sequence, read N- to C-terminus: MKFSELWLREWVNPAIDSDALANQITMAGLEVDGVEPVAGSFHGVVVGEVVECAQHPNADKLRVTKVNVGGDRLLDIVCGAPNCRQGLRVAVATIGAVLPGDFKIKAAKLRGEPSEGMLCSFSELGISDDHNGIIELPADAPIGTDIREYLKLDDNTIEISVTPNRADCLGIIGVARDVAVLNQLPLVEPEIVPVGATIDDTLPITVEAPEACSRYLGRVVKGINVKAPTPLWMKEKLRRCGIRSIDAVVDVTNYVLLELGQPMHAFDKDRIEGGIVVRMAKEGETLVLLDGTEAKLNADTLVIADHNKALAMGGIFGGEHSGVNDETQNVLLECAFFSPLSITGRARRHGLHTDASHRYERGVDPALQHKAMERATCLLIDICGGEAGPVIDITNEATLPKRATITLRRSKLDRLIGHHIADEQVTDILRRLGCEVTEGKDEWQAVAPSWRFDMEIEEDLVEEVARVYGYNNIPDEPVQASLIMGTHREADLSLKRVKTLLNDKGYQEVITYSFVDPKVQQMIHPGVEALLLPSPISVEMSAMRLSLWTGLLATVVYNQNRQQNRVRIFESGLRFVPDTQAPLGIRQDLMLAGVICGNRYEEHWNLAKETVDFYDLKGDLESVLDLTGKLNEVEFRAEANPALHPGQSAAIYLKGERIGFVGVVHPELERKLDLNGRTLVFELEWNKLADRVVPQAREISRFPANRRDIAVVVAENVPAVDILSECKKVGVNQVVGVNLFDVYRGKGVAEGYKSLAISLILQDTSRTLEEEEIAATVAKCVEALKERFQASLRD.

The 110-residue stretch at Ala39–Arg148 folds into the tRNA-binding domain. One can recognise a B5 domain in the interval Pro401 to Asp476. Asp454, Asp460, Glu463, and Glu464 together coordinate Mg(2+). In terms of domain architecture, FDX-ACB spans Ser701–Arg794.

This sequence belongs to the phenylalanyl-tRNA synthetase beta subunit family. Type 1 subfamily. Tetramer of two alpha and two beta subunits. The cofactor is Mg(2+).

It is found in the cytoplasm. It carries out the reaction tRNA(Phe) + L-phenylalanine + ATP = L-phenylalanyl-tRNA(Phe) + AMP + diphosphate + H(+). The chain is Phenylalanine--tRNA ligase beta subunit from Shigella dysenteriae serotype 1 (strain Sd197).